Reading from the N-terminus, the 1222-residue chain is Kinesin-related protein 9 (1222 aa).

The segment covering 1-25 (MDNNNNNFSTPKQPTINSTTGGQLR) has biased composition (polar residues). 3 disordered regions span residues 1 to 55 (MDNN…ITNS), 75 to 165 (MDSL…STNI), and 188 to 343 (SSNT…TQPL). A compositionally biased stretch (low complexity) spans 26–55 (SRSNSSPSTSSISTPRNGSTTATTSSITNS). The segment covering 75-85 (MDSLSTPMSQS) has biased composition (polar residues). Composition is skewed to low complexity over residues 122-165 (SFIS…STNI), 194-209 (SSLP…PLSN), 216-238 (NHHL…ISTT), and 254-325 (NLTT…RTPI). Polar residues predominate over residues 326 to 343 (QNFNSVGGVNITSKTQPL). A Kinesin motor domain is found at 350–719 (SIQAVCRFRP…LNFGQRAQSV (370 aa)). 438–445 (GQTGAGKT) contacts ATP. Residues 724-1026 (LQNVEESHSE…DTLTNKLEIQ (303 aa)) are a coiled coil. A disordered region spans residues 1144 to 1174 (NINNNNNIKNNNNNNKLKSKKVGSSSSSSSN). A helical membrane pass occupies residues 1183–1203 (ILFFLIILVILFFLMVAVGLT).

This sequence belongs to the TRAFAC class myosin-kinesin ATPase superfamily. Kinesin family.

Its subcellular location is the membrane. The protein localises to the cytoplasm. The protein resides in the cytoskeleton. Microtubule-associated force-producing protein that plays a role in organelle transport. Its motor activity is directed toward the microtubule's plus end. The polypeptide is Kinesin-related protein 9 (kif9) (Dictyostelium discoideum (Social amoeba)).